Here is a 97-residue protein sequence, read N- to C-terminus: Large ribosomal subunit protein bL31 (97 aa).

Residues 76 to 97 (KTPKKAKGKTEEYTKHRSLNEL) are disordered. Residues 83 to 97 (GKTEEYTKHRSLNEL) show a composition bias toward basic and acidic residues.

This sequence belongs to the bacterial ribosomal protein bL31 family. Type A subfamily. As to quaternary structure, part of the 50S ribosomal subunit.

Its function is as follows. Binds the 23S rRNA. The polypeptide is Large ribosomal subunit protein bL31 (Mycoplasma pneumoniae (strain ATCC 29342 / M129 / Subtype 1) (Mycoplasmoides pneumoniae)).